Here is a 110-residue protein sequence, read N- to C-terminus: Nucleoid-associated protein SYO3AOP1_1366 (110 aa).

This sequence belongs to the YbaB/EbfC family. Homodimer.

The protein resides in the cytoplasm. The protein localises to the nucleoid. Binds to DNA and alters its conformation. May be involved in regulation of gene expression, nucleoid organization and DNA protection. In Sulfurihydrogenibium sp. (strain YO3AOP1), this protein is Nucleoid-associated protein SYO3AOP1_1366.